Reading from the N-terminus, the 293-residue chain is D-alanine--D-alanine ligase (293 aa).

The region spanning 98–291 (KIIWKQHNLT…FNKLVVAIIN (194 aa)) is the ATP-grasp domain. Residue 124–177 (DFPLPWMVKPTLEGSSIGISKVDSQIQLNNALMLAWQYNSHALIEQWIEGDEYT) participates in ATP binding. Mg(2+) is bound by residues aspartate 245, glutamate 258, and asparagine 260.

This sequence belongs to the D-alanine--D-alanine ligase family. Mg(2+) serves as cofactor. The cofactor is Mn(2+).

Its subcellular location is the cytoplasm. The catalysed reaction is 2 D-alanine + ATP = D-alanyl-D-alanine + ADP + phosphate + H(+). Its pathway is cell wall biogenesis; peptidoglycan biosynthesis. Its function is as follows. Cell wall formation. The polypeptide is D-alanine--D-alanine ligase (Ruthia magnifica subsp. Calyptogena magnifica).